Reading from the N-terminus, the 89-residue chain is Small ribosomal subunit protein uS15 (89 aa).

Belongs to the universal ribosomal protein uS15 family. In terms of assembly, part of the 30S ribosomal subunit. Forms a bridge to the 50S subunit in the 70S ribosome, contacting the 23S rRNA.

One of the primary rRNA binding proteins, it binds directly to 16S rRNA where it helps nucleate assembly of the platform of the 30S subunit by binding and bridging several RNA helices of the 16S rRNA. Its function is as follows. Forms an intersubunit bridge (bridge B4) with the 23S rRNA of the 50S subunit in the ribosome. This is Small ribosomal subunit protein uS15 from Bradyrhizobium sp. (strain BTAi1 / ATCC BAA-1182).